The following is a 277-amino-acid chain: Ras suppressor protein 1 (277 aa).

Residues 1–23 (MSKSLKKLVEESREKNQPEVDMS) are disordered. Ser-2 is modified (N-acetylserine). The segment covering 7–23 (KLVEESREKNQPEVDMS) has biased composition (basic and acidic residues). LRR repeat units follow at residues 41 to 63 (HITQ…AELK), 64 to 85 (NLEV…ISSL), 87 to 108 (KLKH…FGSS), 110 to 133 (LLEV…FFYL), 135 to 156 (TLRA…IGKL), 158 to 179 (KLQI…IGEL), and 181 to 202 (QLKE…LGNL). Positions 250-277 (MQANPEPPKKNNDKSKKISRKPLAAKNK) are disordered. Residues 256-265 (PPKKNNDKSK) show a composition bias toward basic and acidic residues.

In terms of biological role, potentially plays a role in the Ras signal transduction pathway. Capable of suppressing v-Ras transformation in vitro. The polypeptide is Ras suppressor protein 1 (Rsu1) (Mus musculus (Mouse)).